Here is a 56-residue protein sequence, read N- to C-terminus: Small ribosomal subunit protein uS14 (56 aa).

The protein belongs to the universal ribosomal protein uS14 family.

This Kluyveromyces lactis (strain ATCC 8585 / CBS 2359 / DSM 70799 / NBRC 1267 / NRRL Y-1140 / WM37) (Yeast) protein is Small ribosomal subunit protein uS14 (RPS29).